A 537-amino-acid polypeptide reads, in one-letter code: 2-isopropylmalate synthase (537 aa).

The region spanning 8-269 is the Pyruvate carboxyltransferase domain; it reads VLIFDTTLRD…YFNGYLGRAE (262 aa). Mn(2+)-binding residues include Asp17, His208, His210, and Asn244. Residues 408 to 537 form a regulatory domain region; the sequence is QLAGVQVSCG…QRAPLPAPAL (130 aa).

It belongs to the alpha-IPM synthase/homocitrate synthase family. LeuA type 1 subfamily. In terms of assembly, homodimer. The cofactor is Mn(2+).

The protein resides in the cytoplasm. It carries out the reaction 3-methyl-2-oxobutanoate + acetyl-CoA + H2O = (2S)-2-isopropylmalate + CoA + H(+). Its pathway is amino-acid biosynthesis; L-leucine biosynthesis; L-leucine from 3-methyl-2-oxobutanoate: step 1/4. In terms of biological role, catalyzes the condensation of the acetyl group of acetyl-CoA with 3-methyl-2-oxobutanoate (2-ketoisovalerate) to form 3-carboxy-3-hydroxy-4-methylpentanoate (2-isopropylmalate). In Synechococcus sp. (strain RCC307), this protein is 2-isopropylmalate synthase.